Consider the following 210-residue polypeptide: Na(+)-translocating NADH-quinone reductase subunit D (210 aa).

6 helical membrane passes run 9–29 (AVLF…LGIC), 42–62 (LIMS…ISTI), 72–92 (IIVQ…VLQA), 96–116 (ATAK…IVMG), 131–151 (FLDG…VGFI), and 178–198 (MGLL…IWVL).

Belongs to the NqrDE/RnfAE family. As to quaternary structure, composed of six subunits; NqrA, NqrB, NqrC, NqrD, NqrE and NqrF.

The protein localises to the cell inner membrane. It carries out the reaction a ubiquinone + n Na(+)(in) + NADH + H(+) = a ubiquinol + n Na(+)(out) + NAD(+). Functionally, NQR complex catalyzes the reduction of ubiquinone-1 to ubiquinol by two successive reactions, coupled with the transport of Na(+) ions from the cytoplasm to the periplasm. NqrA to NqrE are probably involved in the second step, the conversion of ubisemiquinone to ubiquinol. The chain is Na(+)-translocating NADH-quinone reductase subunit D from Pseudoalteromonas translucida (strain TAC 125).